The sequence spans 689 residues: DNA ligase (689 aa).

NAD(+)-binding positions include 40-44, 89-90, and Glu121; these read DSEYD and SL. Catalysis depends on Lys123, which acts as the N6-AMP-lysine intermediate. The NAD(+) site is built by Arg144, Glu179, Lys295, and Lys319. Positions 413, 416, 431, and 437 each coordinate Zn(2+). The BRCT domain maps to 610–689; the sequence is REQSSLTDKI…EEWLTLIKNV (80 aa).

The protein belongs to the NAD-dependent DNA ligase family. LigA subfamily. Mg(2+) serves as cofactor. The cofactor is Mn(2+).

The enzyme catalyses NAD(+) + (deoxyribonucleotide)n-3'-hydroxyl + 5'-phospho-(deoxyribonucleotide)m = (deoxyribonucleotide)n+m + AMP + beta-nicotinamide D-nucleotide.. In terms of biological role, DNA ligase that catalyzes the formation of phosphodiester linkages between 5'-phosphoryl and 3'-hydroxyl groups in double-stranded DNA using NAD as a coenzyme and as the energy source for the reaction. It is essential for DNA replication and repair of damaged DNA. This is DNA ligase from Rickettsia massiliae (strain Mtu5).